The primary structure comprises 213 residues: GTP cyclohydrolase 1 (213 aa).

Positions 1-27 are disordered; sequence MDDVVKSLLQRTTSSLTKPAPARPSRE. The Zn(2+) site is built by Cys-100, His-103, and Cys-172.

Belongs to the GTP cyclohydrolase I family. As to quaternary structure, homomer.

The catalysed reaction is GTP + H2O = 7,8-dihydroneopterin 3'-triphosphate + formate + H(+). It functions in the pathway cofactor biosynthesis; 7,8-dihydroneopterin triphosphate biosynthesis; 7,8-dihydroneopterin triphosphate from GTP: step 1/1. The polypeptide is GTP cyclohydrolase 1 (Beijerinckia indica subsp. indica (strain ATCC 9039 / DSM 1715 / NCIMB 8712)).